Reading from the N-terminus, the 109-residue chain is Small serum protein 2 (109 aa).

Positions 1–19 (MRVFFSLIIFSFMLATCQG) are cleaved as a signal peptide. Cystine bridges form between Cys21–Cys72, Cys39–Cys64, Cys59–Cys93, Cys62–Cys71, and Cys84–Cys107.

Forms a stable, non-covalent complex with serotriflin.

The protein localises to the secreted. Functionally, may serve as a self-defense protein against the toxic effects of the snake venom during accidental envenomation. Does not show inhibitory activity towards brevilysin H6. This is Small serum protein 2 from Protobothrops flavoviridis (Habu).